A 416-amino-acid chain; its full sequence is Argininosuccinate synthase (416 aa).

Residues A19–S27 and A46 each bind ATP. L-citrulline-binding residues include Y97 and S102. An ATP-binding site is contributed by G127. L-aspartate contacts are provided by T129, N133, and D134. Residue N133 participates in L-citrulline binding. L-citrulline-binding residues include R137, S188, S197, E273, and Y285.

It belongs to the argininosuccinate synthase family. Type 1 subfamily. As to quaternary structure, homotetramer.

The protein localises to the cytoplasm. It carries out the reaction L-citrulline + L-aspartate + ATP = 2-(N(omega)-L-arginino)succinate + AMP + diphosphate + H(+). It functions in the pathway amino-acid biosynthesis; L-arginine biosynthesis; L-arginine from L-ornithine and carbamoyl phosphate: step 2/3. The chain is Argininosuccinate synthase from Granulibacter bethesdensis (strain ATCC BAA-1260 / CGDNIH1).